Here is a 737-residue protein sequence, read N- to C-terminus: Zinc finger protein 184 (737 aa).

The KRAB domain occupies 28 to 99 (VTFKDVVVNF…DSCIPVGPLE (72 aa)). Ser-117 bears the Phosphoserine mark. Lys-185 is covalently cross-linked (Glycyl lysine isopeptide (Lys-Gly) (interchain with G-Cter in SUMO2)). 17 C2H2-type zinc fingers span residues 201-223 (CKCNECGKAFTYCSALIRHQRTH), 229-251 (YKCNECNKAFSRSENLINHQRIH), 257-279 (YKCDQCGKGFIEGPSLTQHQRIH), 285-307 (YKCDECGKAFSQRTHLVQHQRIH), 313-335 (YTCTECGKSFSQRGHFMEHQKIH), 341-363 (FKCEECEKTFTRSTHLTQHQKIH), 369-391 (YKCNECGKAFNGPSTFIRHHMIH), 397-419 (YECNECGKAFSQHSNLTQHQKTH), 425-447 (YDCAECGKAFSYWSSLAQHLKIH), 453-475 (YKCSDCGKAFSYCSSLTQHRRIH), 481-503 (FECSECGKAFSYLSNLNQHQKTH), 509-531 (YECKECGKAFIRSSSLAKHERIH), 537-559 (YQCHECGKTFSYGSSLIQHKKIH), 565-587 (YKCNECGRAFNQKIHLTQHKRIH), 593-615 (YACPKCGKTFRHCSSLAQHQKTH), 621-643 (YQCNKCEKTFSQNSRLTQHQRIH), and 649-671 (YKCSECDKCFTGSVHLTEHRSTH). A C2H2-type 18; degenerate zinc finger spans residues 677-698 (YNSECPQTFSQSTYLTQHQKIH). The C2H2-type 19 zinc-finger motif lies at 704–726 (LGCEDCEKAFQCHSALTKHQRLH).

This sequence belongs to the krueppel C2H2-type zinc-finger protein family.

It localises to the nucleus. Its function is as follows. May be involved in transcriptional regulation. In Mus musculus (Mouse), this protein is Zinc finger protein 184 (Zfp184).